Here is a 229-residue protein sequence, read N- to C-terminus: MRMPLSVLTAAGLSLATLGLGTAGPASATPTAEGAPVVAYDGSPSAGSPADAKAEAAANRAFFEAVLRSVAEKRAANPKSTAAVTVVYNASGAPSFATQIARGTQIWNSSVSNVRLQAGSSGVDFTYREGNDPRGSYASTDGHGRGYIFLDYRQNQTYDSTRVTAHETGHVLGLPDHYSGPCSELMSGGGPGPSCTNAYPNSAERSRVNQLWANGFAAAMDKALEKSAR.

Positions 1–28 (MRMPLSVLTAAGLSLATLGLGTAGPASA) are cleaved as a signal peptide. The propeptide occupies 29-81 (TPTAEGAPVVAYDGSPSAGSPADAKAEAAANRAFFEAVLRSVAEKRAANPKST). 2 residues coordinate Ca(2+): Asp-159 and Thr-161. His-166 is a Zn(2+) binding site. Residue Glu-167 is part of the active site. The Zn(2+) site is built by His-170 and Asp-176. A disulfide bridge connects residues Cys-182 and Cys-195.

It belongs to the peptidase M7 family. Monomer. Ca(2+) serves as cofactor. It depends on Zn(2+) as a cofactor.

It is found in the secreted. It catalyses the reaction Hydrolyzes proteins with a preference for Tyr or Phe in the P1' position. Has no action on amino-acid p-nitroanilides.. Milk hydrolyzing. In Streptomyces sp. (strain C5), this protein is Extracellular small neutral protease (snpA).